Here is a 627-residue protein sequence, read N- to C-terminus: (-)-alpha-pinene synthase 1, chloroplastic (627 aa).

Residues 1 to 36 constitute a chloroplast transit peptide; the sequence is MALVSIAPLASKSCLHKSLSSSAHELKTICRTIPTL. D378, D382, and D530 together coordinate Mg(2+). Residues 378–382 carry the DDXXD motif motif; it reads DDMYD.

This sequence belongs to the terpene synthase family. Tpsd subfamily. It depends on Mg(2+) as a cofactor. Mn(2+) serves as cofactor.

The protein localises to the plastid. It is found in the chloroplast. It carries out the reaction (2E)-geranyl diphosphate = (1S,5S)-beta-pinene + diphosphate. The catalysed reaction is (2E)-geranyl diphosphate = (1S,5S)-alpha-pinene + diphosphate. It functions in the pathway terpene metabolism; oleoresin biosynthesis. Its function is as follows. Terpene synthase (TPS) involved in the biosynthesis of monoterpene natural products included in conifer oleoresin secretions and volatile emissions; these compounds contribute to biotic and abiotic stress defense against herbivores and pathogens. Catalyzes the conversion of (2E)-geranyl diphosphate (GPP) to (1S,5S)-beta-pinene. The chain is (-)-alpha-pinene synthase 1, chloroplastic from Picea sitchensis (Sitka spruce).